The chain runs to 430 residues: Aspartate--tRNA(Asp/Asn) ligase (430 aa).

L-aspartate is bound at residue Glu-168. Residues 190 to 193 are aspartate; sequence QLYK. Position 212 (Arg-212) interacts with L-aspartate. ATP is bound by residues 212–214, 220–222, and Glu-353; these read RAE and RHL. Residues Glu-353 and Ser-356 each coordinate Mg(2+). 2 residues coordinate L-aspartate: Ser-356 and Arg-360. 401-404 is an ATP binding site; it reads GAER.

The protein belongs to the class-II aminoacyl-tRNA synthetase family. Type 2 subfamily. As to quaternary structure, homodimer. Mg(2+) serves as cofactor.

Its subcellular location is the cytoplasm. The enzyme catalyses tRNA(Asx) + L-aspartate + ATP = L-aspartyl-tRNA(Asx) + AMP + diphosphate. Functionally, aspartyl-tRNA synthetase with relaxed tRNA specificity since it is able to aspartylate not only its cognate tRNA(Asp) but also tRNA(Asn). Reaction proceeds in two steps: L-aspartate is first activated by ATP to form Asp-AMP and then transferred to the acceptor end of tRNA(Asp/Asn). This chain is Aspartate--tRNA(Asp/Asn) ligase, found in Archaeoglobus fulgidus (strain ATCC 49558 / DSM 4304 / JCM 9628 / NBRC 100126 / VC-16).